The sequence spans 44 residues: Mu-conotoxin-like Cal 12.1.1e (44 aa).

4 disulfide bridges follow: Cys-3-Cys-16, Cys-11-Cys-28, Cys-18-Cys-33, and Cys-27-Cys-38. Trp-17 is subject to 6'-bromotryptophan. A 4-hydroxyproline modification is found at Pro-23. 2 positions are modified to 6'-bromotryptophan: Trp-36 and Trp-37. The residue at position 39 (Pro-39) is a 4-hydroxyproline. Trp-43 is subject to 6'-bromotryptophan.

As to expression, expressed by the venom duct.

It is found in the secreted. In terms of biological role, mu-conotoxins block voltage-gated sodium channels. This toxin reversibly blocks voltage-gated sodium channel in cephalopods, with no alteration in the voltage dependence of sodium conductance or on the kinetics of inactivation. This is Mu-conotoxin-like Cal 12.1.1e from Californiconus californicus (California cone).